A 198-amino-acid polypeptide reads, in one-letter code: Recombination protein RecR (198 aa).

Residues Cys-58–Cys-73 form a C4-type zinc finger. In terms of domain architecture, Toprim spans Ser-81–Pro-175.

The protein belongs to the RecR family.

In terms of biological role, may play a role in DNA repair. It seems to be involved in an RecBC-independent recombinational process of DNA repair. It may act with RecF and RecO. The polypeptide is Recombination protein RecR (Clostridium botulinum (strain Alaska E43 / Type E3)).